Reading from the N-terminus, the 358-residue chain is Hydroxyproline O-arabinosyltransferase 3 (358 aa).

A helical; Signal-anchor membrane pass occupies residues 8 to 28 (LLFLLGFGFFVVTYNLLTLIV).

As to expression, ubiquitous.

It localises to the golgi apparatus. It is found in the cis-Golgi network membrane. It carries out the reaction trans-4-hydroxy-L-prolyl-[protein] + UDP-beta-L-arabinofuranose = O-(beta-L-arabinofuranosyl)-trans-4-hydroxy-L-prolyl-[protein] + UDP + H(+). Glycosyltransferase involved in the O-arabinosylation of several proteins including extensins and small signaling peptides. Catalyzes the transfer of the initial L-arabinose to the hydroxyl group of Hyp residues. Contributes redundantly with HPAT1 and HPAT2 to arabinosylation of EXT3, but main contributor to arabinosylation of CLE peptides. The chain is Hydroxyproline O-arabinosyltransferase 3 from Arabidopsis thaliana (Mouse-ear cress).